The chain runs to 641 residues: Soluble starch synthase 1, chloroplastic/amyloplastic (641 aa).

A chloroplast-targeting transit peptide spans 1 to 113 (MATAAGMGIG…DSIDKTIFVA (113 aa)). Positions 62 to 96 (TFLVPTSTPPAPTQSPAPAPTPPPLPDSGVGEIEP) are disordered. Positions 68–87 (STPPAPTQSPAPAPTPPPLP) are enriched in pro residues. K147 contributes to the ADP-alpha-D-glucose binding site.

It belongs to the glycosyltransferase 1 family. Bacterial/plant glycogen synthase subfamily. As to expression, leaves and immature seeds.

The protein resides in the plastid. It is found in the chloroplast. Its subcellular location is the amyloplast. It carries out the reaction [(1-&gt;4)-alpha-D-glucosyl](n) + ADP-alpha-D-glucose = [(1-&gt;4)-alpha-D-glucosyl](n+1) + ADP + H(+). Its pathway is glycan biosynthesis; starch biosynthesis. Its function is as follows. Involved in starch synthesis in endosperm amyloplasts. Plays a role in the elongation of amylopectin chains. Synthesizes preferentially amylopectin chains with a degree of polymerization (DP) of 7 to 11 by elongating chains with a DP of 4 to 7. Generates distincly chains with a DP of 8 to 12 chains from short chains with a DP of 6 to 7. This Oryza sativa subsp. japonica (Rice) protein is Soluble starch synthase 1, chloroplastic/amyloplastic.